Consider the following 192-residue polypeptide: MITISETAQAHFVKLLSDQPEGTHIRVFVISPGTAQAECGVSYCPPDAVEADDTEFEFNGFNAMVDEKSAPFLEEATIDFVTDQLGSQLTLKAPNAKMRKVSDDASLSERIEYVIQSEINPQLASHGGNIMLVEITEEGIAVLQFGGGCNGCSMVDVTLKDGIEKQLLEMFPSELTGVKDVTEHQHGEHSYQ.

2 residues coordinate [4Fe-4S] cluster: cysteine 149 and cysteine 152.

This sequence belongs to the NfuA family. Homodimer. The cofactor is [4Fe-4S] cluster.

Involved in iron-sulfur cluster biogenesis. Binds a 4Fe-4S cluster, can transfer this cluster to apoproteins, and thereby intervenes in the maturation of Fe/S proteins. Could also act as a scaffold/chaperone for damaged Fe/S proteins. This is Fe/S biogenesis protein NfuA from Shewanella halifaxensis (strain HAW-EB4).